The following is an 874-amino-acid chain: MKAAEIREKFLKFFESKGHTIVRSSSLVPGNDPTLMFTNSGMVQFKDVFLGTDPRPYSRATTAQRSVRAGGKHNDLENVGYTARHHTFFEMLGNFSFGDYFKHDAIKFAWELLTTVYQLPKDKLWVTVYQEDDEAYDIWAKEVGVPTERIIRIGDNKGARYASDNFWTMGDTGPCGPCTEIFYDHGPDVWGGPPGSPEEDGDRYIEIWNLVFMQFNRDAQGNMTRLPKQSVDTGMGLERLAAVLQHVHSNYEIDLFQNLIKAAARVTEISDLTNNSLKVIADHIRACSFLIVDGVIPGNEGRGYVLRRIVRRAIRHGYKLGRKGSFFHKLVADLVAEMGVAYPELKEAEQRVTDVLRQEEERFFETIEHGMSILEGALADVEAKGGKVLDGELAFKLHDTYGFPLDLTADVCRERGMTVDEPAFDDAMARQREQARAAGKFKAAQGLEYTGAKTTFHGYEEIAFDDAKIVALYVDGSSVNEVKTGQDAVVVLDHTPFYAESGGQVGDQGVLANAATRFAVADTLKVQADVIGHHGTLEQGTLKVGDVLRAEIDAHRRARTQRNHSATHLMHKALREVLGAHVQQKGSLVDAEKTRFDFAHNAPMTDDEIRRVEQIVNNEILANAPGIVRVMPYDEAVKGGAMALFGEKYGDEVRVLDLGFSRELCGGTHVSRSGDIGFFKIVVEGGVAAGIRRVEAITGDNAVRYVQELDARVNEAAAALKAQPSELTQRIAQVQDQVKSLEKELGALKSKLASSQGDELAQQAVEIGGVFVLAATLDGADAKTLRETVDKLKDKLKSAAIVLAAVESGKVSLIAGVTPDASKKVKAGELVNFVAQQVGGKGGGRPDMAQAGGTEPANLPGALAGVKGWVEERL.

Zn(2+)-binding residues include histidine 564, histidine 568, cysteine 665, and histidine 669.

Belongs to the class-II aminoacyl-tRNA synthetase family. The cofactor is Zn(2+).

The protein resides in the cytoplasm. It carries out the reaction tRNA(Ala) + L-alanine + ATP = L-alanyl-tRNA(Ala) + AMP + diphosphate. Catalyzes the attachment of alanine to tRNA(Ala) in a two-step reaction: alanine is first activated by ATP to form Ala-AMP and then transferred to the acceptor end of tRNA(Ala). Also edits incorrectly charged Ser-tRNA(Ala) and Gly-tRNA(Ala) via its editing domain. The protein is Alanine--tRNA ligase of Burkholderia lata (strain ATCC 17760 / DSM 23089 / LMG 22485 / NCIMB 9086 / R18194 / 383).